Here is a 382-residue protein sequence, read N- to C-terminus: Pyrimidine monooxygenase RutA (382 aa).

Residues 68 to 69 (IK), Asn134, Glu143, 159 to 160 (RY), and Ser209 contribute to the FMN site.

The protein belongs to the NtaA/SnaA/DszA monooxygenase family. RutA subfamily.

It catalyses the reaction uracil + FMNH2 + NADH + O2 = (Z)-3-ureidoacrylate + FMN + NAD(+) + H2O + H(+). The catalysed reaction is thymine + FMNH2 + NADH + O2 = (Z)-2-methylureidoacrylate + FMN + NAD(+) + H2O + H(+). Functionally, catalyzes the pyrimidine ring opening between N-3 and C-4 by an unusual flavin hydroperoxide-catalyzed mechanism, adding oxygen atoms in the process to yield ureidoacrylate peracid, that immediately reacts with FMN forming ureidoacrylate and FMN-N(5)-oxide. The FMN-N(5)-oxide reacts spontaneously with NADH to produce FMN. Requires the flavin reductase RutF to regenerate FMN in vivo. In Shigella flexneri serotype X (strain 2002017), this protein is Pyrimidine monooxygenase RutA.